A 105-amino-acid chain; its full sequence is UPF0473 protein SAK_2028 (105 aa).

The protein belongs to the UPF0473 family.

The protein is UPF0473 protein SAK_2028 of Streptococcus agalactiae serotype Ia (strain ATCC 27591 / A909 / CDC SS700).